A 1216-amino-acid chain; its full sequence is MRVSLTEFLVLAQVVTTLQPITIKVDFHEVKHHESIGDYVELVEGKNRDISLTCYGQHKNLKIEPPKREEHAGFPEIGIRTSAEWKKNEYWFLLKNVRQCDTGSYYCVSDEFKESMLQNTVHIFVRKLDIFVPLKTIYHEHNGSEIIIPCKTTKFVDTKNVELYVNQVKLNSALQGYDQRYGFKLTKNMYTMKPNSTVFFECKYTNDSNQDLDYYISNSDPDATLIDQYFFYWEKSNDVPYVGNNYSITCHLVYIGSDSLRPLNHQEIVLECPQNQCDGGYNNQSAHEIEKRSSGLRFGDPSSQDIVEKNTMLRYDRLSVYDRKTSRTVNFQNLTSEDSGIYRCTWRNRSKTNIVLDYDLNFNQKGTQIKIIETSKQRLKMRKNESTLLFVKFAVFPINKKNYTAKWSRLYNSTVEGGQQVETIRNGFFRQITTKTSGRNVFLETLNLKSPKIEMSGIYVLSISNMDIVQQVKWIIEVENDEPNAQLTIRDPLTLNISNQLFLPLNTNLSIFCLAVSSSPTDVIFEYRTDENEWFRGFYKNKLRKIDDTFEKGFIYNFVLAKRTDFKCINVKKKKTSTKFITVTSNANKTFHEIEKSVNATKTEPSDIIFEGDNVRLTCVVPYGAVEFDVFWKFENPKMLKYTTFPAMHPVKDRYKRVILNVRNITIDFTGTYYCIVKNKEFEHRFETSISVEKVSPPFLLNNNSRSIISASNGQMFDINCKVNGVPTPDYTWFKDGYPYTKGKVIGNALHVSKAEKRDNGIFWCSATNRAGTTIDYIEVKVAGASSSSFFWLFITFFAFVVVGIVVSLLWKLFGQKDLKPSELSLNNLKRATDEYQKYTVSEKINNLPVEERIDYLTYNEDYEIDLENLEILETLGSGQFGIVKKGYLNMASSKNFGFESRLSVAIKSSTDSSNMELQKMFFEELKLMCAIPKHPNVLSLVGAVTKNMEIGELFIVTELIDGGNLREFLRERRDVFANELVEKGYIFLTNVRENVPKREVEKEQLLIDEFNSLCTSDLLSIGLQIANGMDWLANIPCVHRDLACRNVLISKTKIIRIADFGLAKKHTDKAYYRVRESLDTPLPVRWMPLESITDLTFTQKSDVWSYGICLYEIFTLGGTPYPDCPNFSLVEYIKTGNINKRPSNCHKDVYKIMKMCWQASPDDRPTFAECIKLFKNHIQYFASKLLQQIEKDLECEKNNQQKFHYWVQKPTQLFF.

The Extracellular segment spans residues 1 to 789 (MRVSLTEFLV…VKVAGASSSS (789 aa)). N-linked (GlcNAc...) asparagine glycosylation is found at N142, N195, N206, N245, N283, N333, N348, N384, N402, N412, N496, N508, N588, N599, N664, and N703. Ig-like C2-type domains lie at 596–691 (KSVN…TSIS) and 697–783 (PPFL…VKVA). C619 and C675 are oxidised to a cystine. A disulfide bridge connects residues C721 and C765. Residues 790 to 810 (FFWLFITFFAFVVVGIVVSLL) form a helical membrane-spanning segment. The Cytoplasmic segment spans residues 811-1216 (WKLFGQKDLK…WVQKPTQLFF (406 aa)). One can recognise a Protein kinase domain in the interval 870–1181 (LEILETLGSG…IKLFKNHIQY (312 aa)). Residues 876–884 (LGSGQFGIV) and K908 contribute to the ATP site. Catalysis depends on D1042, which acts as the Proton acceptor.

Belongs to the protein kinase superfamily. Tyr protein kinase family.

The protein localises to the cell membrane. It carries out the reaction L-tyrosyl-[protein] + ATP = O-phospho-L-tyrosyl-[protein] + ADP + H(+). Functionally, receptor tyrosine kinase which may be involved, downstream of pvf-1, in the positioning of ray 1, the most anterior ray sensillum in the male tail. This Caenorhabditis elegans protein is Tyrosine-protein kinase receptor ver-4.